Consider the following 288-residue polypeptide: Pantothenate synthetase (288 aa).

30-37 serves as a coordination point for ATP; sequence MGNLHNGH. The Proton donor role is filled by H37. (R)-pantoate is bound at residue Q61. Beta-alanine is bound at residue Q61. Residue 149-152 coordinates ATP; sequence GQKD. Q155 provides a ligand contact to (R)-pantoate. ATP is bound by residues V178 and 186 to 189; that span reads LSSR.

This sequence belongs to the pantothenate synthetase family. Homodimer.

The protein localises to the cytoplasm. The enzyme catalyses (R)-pantoate + beta-alanine + ATP = (R)-pantothenate + AMP + diphosphate + H(+). It participates in cofactor biosynthesis; (R)-pantothenate biosynthesis; (R)-pantothenate from (R)-pantoate and beta-alanine: step 1/1. Functionally, catalyzes the condensation of pantoate with beta-alanine in an ATP-dependent reaction via a pantoyl-adenylate intermediate. This chain is Pantothenate synthetase, found in Tolumonas auensis (strain DSM 9187 / NBRC 110442 / TA 4).